The primary structure comprises 235 residues: Thymidylate kinase (235 aa).

10–17 (GINGVEKS) lines the ATP pocket.

It belongs to the thymidylate kinase family.

It carries out the reaction dTMP + ATP = dTDP + ADP. The protein operates within pyrimidine metabolism; dTTP biosynthesis. In terms of biological role, catalyzes the conversion of dTMP to dTDP. The chain is Thymidylate kinase (TMK) from African swine fever virus (isolate Pig/Kenya/KEN-50/1950) (ASFV).